Here is a 558-residue protein sequence, read N- to C-terminus: Adenine deaminase (558 aa).

This sequence belongs to the metallo-dependent hydrolases superfamily. Adenine deaminase family. Mn(2+) is required as a cofactor.

The enzyme catalyses adenine + H2O + H(+) = hypoxanthine + NH4(+). This is Adenine deaminase from Deinococcus deserti (strain DSM 17065 / CIP 109153 / LMG 22923 / VCD115).